A 1140-amino-acid polypeptide reads, in one-letter code: DNA damage-binding protein 1 (1140 aa).

The residue at position 2 (Ser-2) is an N-acetylserine. An interaction with CDT1 region spans residues 2–768 (SYNYVVTAQK…QALSSSVSSS (767 aa)). The WD repeat beta-propeller A stretch occupies residues 13–356 (TAVNGCVTGH…VVAMETFTNL (344 aa)). A WD repeat beta-propeller B; Interaction with CUL4A region spans residues 391–708 (RNGIGIHEHA…LTIGTIDEIQ (318 aa)). Positions 709 to 1043 (KLHIRTVPLY…NGMIGLVTSL (335 aa)) are WD repeat beta-propeller C. An interaction with CDT1 and CUL4A region spans residues 771–1140 (FSSSTAPHET…KVVEELTRIH (370 aa)). Lys-1067 carries the post-translational modification N6-acetyllysine. Lys-1121 is covalently cross-linked (Glycyl lysine isopeptide (Lys-Gly) (interchain with G-Cter in SUMO2)). Position 1125 is a phosphothreonine (Thr-1125).

Belongs to the DDB1 family. In terms of assembly, component of the UV-DDB complex which includes DDB1 and DDB2; the heterodimer dimerizes to give rise to a heterotetramer when bound to damaged DNA. The UV-DDB complex interacts with monoubiquitinated histone H2A and binds to XPC via the DDB2 subunit. Component of numerous DCX (DDB1-CUL4-X-box) E3 ubiquitin-protein ligase complexes which consist of a core of DDB1, CUL4A or CUL4B and RBX1. DDB1 may recruit specific substrate targeting subunits to the DCX complex. These substrate targeting subunits are generally known as DCAF (DDB1- and CUL4-associated factor) or CDW (CUL4-DDB1-associated WD40-repeat) proteins. Interacts with AMBRA1, ATG16L1, BTRC, CRBN, DCAF1, DCAF4, DCAF5, DCAF6, DCAF7, DCAF8, DCAF9, DCAF10, DCAF11, DCAF12, DCAF15, DCAF16, DCAF17, DDA1, DET1, DTL, ERCC8, FBXW5, FBXW8, GRWD1, KATNB1, NLE1, NUP43, PAFAH1B1, PHIP, PWP1, RBBP4, RBBP5, RBBP7, COP1, SNRNP40, DCAF1, WDR5, WDR5B, WDR12, WDR26, WDR39, WDR42, WDR53, WDR59, WDR61, WSB1, WSB2, LRWD1 and WDTC1. DCX complexes may associate with the COP9 signalosome, and this inhibits the E3 ubiquitin-protein ligase activity of the complex. Interacts with NF2, TSC1 and TSC2. Interacts with AGO1 and AGO2. Associates with the E3 ligase complex containing DYRK2, EDD/UBR5, DDB1 and DCAF1 proteins (EDVP complex). Interacts directly with DYRK2. DCX(DTL) complex interacts with FBXO11; does not ubiquitinate and degradate FBXO11. Interacts with TRPC4AP. Interacts with CRY1 and CRY2. The DDB1-CUL4A complex interacts with CRY1. Component of the DCX(DCAF13) E3 ubiquitin ligase complex, at least composed of CUL4 (CUL4A or CUL4B), DDB1, DCAF13 and RBX1. Interacts with DCAF13 (via WD40 domain). Phosphorylated by ABL1. Post-translationally, ubiquitinated by CUL4A. Subsequently degraded by ubiquitin-dependent proteolysis. In terms of processing, acetylated, promoting interaction with CUL4 (CUL4A or CUL4B) and subsequent formation of DCX (DDB1-CUL4-X-box) E3 ubiquitin-protein ligase complexes. Deacetylation by SIRT7 impairs the interaction with CUL4 (CUL4A or CUL4B) and formation of DCX (DDB1-CUL4-X-box) E3 ubiquitin-protein ligase complexes. In terms of tissue distribution, widely expressed. Expressed in pregnant, lactating and involuting mammary gland. Expressed in oocytes (at protein level).

It is found in the cytoplasm. The protein resides in the nucleus. It participates in protein modification; protein ubiquitination. Functionally, protein, which is both involved in DNA repair and protein ubiquitination, as part of the UV-DDB complex and DCX (DDB1-CUL4-X-box) complexes, respectively. Core component of the UV-DDB complex (UV-damaged DNA-binding protein complex), a complex that recognizes UV-induced DNA damage and recruit proteins of the nucleotide excision repair pathway (the NER pathway) to initiate DNA repair. The UV-DDB complex preferentially binds to cyclobutane pyrimidine dimers (CPD), 6-4 photoproducts (6-4 PP), apurinic sites and short mismatches. Also functions as a component of numerous distinct DCX (DDB1-CUL4-X-box) E3 ubiquitin-protein ligase complexes which mediate the ubiquitination and subsequent proteasomal degradation of target proteins. The functional specificity of the DCX E3 ubiquitin-protein ligase complex is determined by the variable substrate recognition component recruited by DDB1. DCX(DDB2) (also known as DDB1-CUL4-ROC1, CUL4-DDB-ROC1 and CUL4-DDB-RBX1) may ubiquitinate histone H2A, histone H3 and histone H4 at sites of UV-induced DNA damage. The ubiquitination of histones may facilitate their removal from the nucleosome and promote subsequent DNA repair. DCX(DDB2) also ubiquitinates XPC, which may enhance DNA-binding by XPC and promote NER. DCX(DTL) plays a role in PCNA-dependent polyubiquitination of CDT1 and MDM2-dependent ubiquitination of TP53 in response to radiation-induced DNA damage and during DNA replication. DCX(ERCC8) (the CSA complex) plays a role in transcription-coupled repair (TCR). The DDB1-CUL4A-DTL E3 ligase complex regulates the circadian clock function by mediating the ubiquitination and degradation of CRY1. DDB1-mediated CRY1 degradation promotes FOXO1 protein stability and FOXO1-mediated gluconeogenesis in the liver. By acting on TET dioxygenses, essential for oocyte maintenance at the primordial follicle stage, hence essential for female fertility. Maternal factor required for proper zygotic genome activation and genome reprogramming. In Mus musculus (Mouse), this protein is DNA damage-binding protein 1 (Ddb1).